A 518-amino-acid polypeptide reads, in one-letter code: Reduced folate transporter (518 aa).

At Met1 the chain carries N-acetylmethionine. Over 1-29 the chain is Cytoplasmic; the sequence is MVPTGQVAEKQACEEPRQDRELKSWRCLV. A helical membrane pass occupies residues 30–50; that stretch reads FYLCFFGFMAQLRPGESFITP. Residues Ile48 and Thr49 each coordinate folate. The Extracellular portion of the chain corresponds to 51–62; that stretch reads YLLQQNFTIEQV. Asn56 carries an N-linked (GlcNAc...) asparagine glycan. Residues 63-85 form a helical membrane-spanning segment; the sequence is TNEIIPVLPYSHLAVLVPIFLLT. Topologically, residues 86 to 89 are cytoplasmic; it reads DYLR. A helical transmembrane segment spans residues 90–110; that stretch reads YKPILILQCLSFMCVWLLLLL. Residues 111–114 lie on the Extracellular side of the membrane; it reads GTSV. The chain crosses the membrane as a helical span at residues 115–137; that stretch reads VHMQLMEVFYSVTMAARIAYSSY. Residues Glu121 and Arg131 each contribute to the folate site. Topologically, residues 138-151 are cytoplasmic; that stretch reads IFSLVRPSRYQRMA. The helical transmembrane segment at 152–176 threads the bilayer; the sequence is SYSRAAVLLGVFTSSVLGQVLWPLE. Position 162 (Val162) interacts with folate. At 177-181 the chain is on the extracellular side; the sequence is QKSQN. The chain crosses the membrane as a helical span at residues 182-200; sequence SNMLNYISLGFIIFSLGLS. Residues 201-266 are Cytoplasmic-facing; sequence LFLKRPKHSL…LSELVGNLRQ (66 aa). Residues 267-292 form a helical membrane-spanning segment; that stretch reads PQLRLWCLWWVFNSAGYYLIVYYVHV. 3 residues coordinate folate: Ala281, Gly282, and Ile286. Topologically, residues 293–300 are extracellular; the sequence is LWSIDKNL. A helical membrane pass occupies residues 301-323; sequence NYNGAVDAASTLLSAITSFSAGF. The Cytoplasmic portion of the chain corresponds to 324–329; the sequence is VKIRWA. Residues 330 to 350 form a helical membrane-spanning segment; it reads LWSKLVIASVIAIQAGLVFCM. Residues 351–353 lie on the Extracellular side of the membrane; that stretch reads YMV. The chain crosses the membrane as a helical span at residues 354 to 377; it reads HYVTWVHKIWVLYMTYVLFRGAYQ. 2 residues coordinate folate: Tyr366 and Val370. The Cytoplasmic portion of the chain corresponds to 378–391; sequence FLVPIATFQIASSL. Residues 392 to 415 traverse the membrane as a helical segment; sequence SKELCALVFGINTFLATALKTAIT. The tract at residues 407 to 419 is required for substrate-binding; the sequence is ATALKTAITLVVS. The Extracellular segment spans residues 416-423; the sequence is LVVSDKRG. Residues 424-448 traverse the membrane as a helical segment; sequence LGLKVEKQFCIYSVYFMVLSVICFV. Residues 449–512 are Cytoplasmic-facing; that stretch reads GAVLDGVRYC…DGVEDSEASL (64 aa). A phosphoserine mark is found at Ser473, Ser478, and Ser483. The segment at 480 to 518 is disordered; sequence QVPSMQDGGLGGLQPSAPQLLPEDGVEDSEASLRAEAKA.

The protein belongs to the reduced folate carrier (RFC) transporter (TC 2.A.48) family.

Its subcellular location is the cell membrane. The protein localises to the apical cell membrane. It is found in the basolateral cell membrane. The catalysed reaction is 5-amino-1-(5-phospho-beta-D-ribosyl)imidazole-4-carboxamide(in) + (6S)-5-methyl-5,6,7,8-tetrahydrofolate(out) = 5-amino-1-(5-phospho-beta-D-ribosyl)imidazole-4-carboxamide(out) + (6S)-5-methyl-5,6,7,8-tetrahydrofolate(in). In terms of biological role, antiporter that mediates the import of reduced folates, driven by the export of organic anions. Also acts as an importer of immunoreactive cyclic dinucleotides, but with a lower transporter activity. Mechanistically, acts as a secondary active transporter, which exports intracellular organic anions down their concentration gradients to facilitate the uptake of its substrates. Has high affinity for N5-methyltetrahydrofolate, the predominant circulating form of folate. Also mediates the import of antifolate drug methotrexate. 5-amino-4-imidazolecarboxamide riboside (AICAR), when phosphorylated to AICAR monophosphate, can serve as an organic anion for antiporter activity. The polypeptide is Reduced folate transporter (Cricetulus griseus (Chinese hamster)).